A 129-amino-acid chain; its full sequence is Transcription antitermination protein NusB (129 aa).

Belongs to the NusB family.

In terms of biological role, involved in transcription antitermination. Required for transcription of ribosomal RNA (rRNA) genes. Binds specifically to the boxA antiterminator sequence of the ribosomal RNA (rrn) operons. This chain is Transcription antitermination protein NusB, found in Staphylococcus epidermidis (strain ATCC 35984 / DSM 28319 / BCRC 17069 / CCUG 31568 / BM 3577 / RP62A).